The following is a 335-amino-acid chain: Phenylalanine--tRNA ligase alpha subunit (335 aa).

Glutamate 262 serves as a coordination point for Mg(2+).

Belongs to the class-II aminoacyl-tRNA synthetase family. Phe-tRNA synthetase alpha subunit type 1 subfamily. Tetramer of two alpha and two beta subunits. Mg(2+) is required as a cofactor.

The protein localises to the cytoplasm. It catalyses the reaction tRNA(Phe) + L-phenylalanine + ATP = L-phenylalanyl-tRNA(Phe) + AMP + diphosphate + H(+). In Prochlorococcus marinus (strain MIT 9313), this protein is Phenylalanine--tRNA ligase alpha subunit.